The chain runs to 557 residues: Organic cation/carnitine transporter 2 (557 aa).

The Cytoplasmic segment spans residues 1–20 (MRDYDEVTAFLGEWGPFQRL). The helical transmembrane segment at 21 to 41 (IFFLLSASIIPNGFNGMSIVF) threads the bilayer. At 42–142 (LAGTPEHRCL…DLVCKDDWKA (101 aa)) the chain is on the extracellular side. N-linked (GlcNAc...) asparagine glycosylation is found at Asn57, Asn64, and Asn91. Residues 143–163 (PLTTSLFFVGVLMGSFISGQL) traverse the membrane as a helical segment. The Cytoplasmic portion of the chain corresponds to 164–172 (SDRFGRKNV). Residues 173-193 (LFLTMGMQTGFSFLQVFSVNF) form a helical membrane-spanning segment. At 194–197 (EMFT) the chain is on the extracellular side. A helical transmembrane segment spans residues 198–218 (VLFVLVGMGQISNYVAAFVLG). 218 to 225 (GTEILSKS) is an ATP binding site. Topologically, residues 219 to 232 (TEILSKSIRIIFAT) are cytoplasmic. The helical transmembrane segment at 233–253 (LGVCIFYAFGFMVLPLFAYFI) threads the bilayer. Topologically, residues 254 to 257 (RDWR) are extracellular. The helical transmembrane segment at 258–278 (MLLLALTVPGVLCGALWWFIP) threads the bilayer. At 279–341 (ESPRWLISQG…YDLIRTRNIR (63 aa)) the chain is on the cytoplasmic side. The helical transmembrane segment at 342–362 (VITIMSIILWLTISVGYFGLS) threads the bilayer. Residues 363–373 (LDTPNLHGDIY) are Extracellular-facing. Residues 374 to 394 (VNCFLLAAVEVPAYVLAWLLL) traverse the membrane as a helical segment. At 395 to 406 (QYLPRRYSISAA) the chain is on the cytoplasmic side. The helical transmembrane segment at 407 to 427 (LFLGGSVLLFMQLVPSELFYL) threads the bilayer. The Extracellular segment spans residues 428-430 (STA). The helical transmembrane segment at 431 to 451 (LVMVGKFGITSAYSMVYVYTA) threads the bilayer. Residues 452 to 462 (ELYPTVVRNMG) are Cytoplasmic-facing. Residues 463–483 (VGVSSTASRLGSILSPYFVYL) traverse the membrane as a helical segment. Residues 484–488 (GAYDR) lie on the Extracellular side of the membrane. Tyr486 is subject to Phosphotyrosine. The chain crosses the membrane as a helical span at residues 489–509 (FLPYILMGSLTILTAILTLFF). Residues 510-557 (PESFGVPLPDTIDQMLRVKGIKQWQIQSQTRMQKDGEESPTVLKSTAF) lie on the Cytoplasmic side of the membrane. Ser548 is modified (phosphoserine). Thr550 bears the Phosphothreonine mark.

It belongs to the major facilitator (TC 2.A.1) superfamily. Organic cation transporter (TC 2.A.1.19) family. In terms of assembly, interacts with PDZK1. Widely expressed. Expressed in kidney, liver and testis. Expressed at the brush border of the small, large intestine and colon (at protein level).

It is found in the apical cell membrane. It localises to the basal cell membrane. The protein resides in the cell membrane. The catalysed reaction is (R)-carnitine(out) + Na(+)(out) = (R)-carnitine(in) + Na(+)(in). The enzyme catalyses glycine betaine(out) + Na(+)(out) = glycine betaine(in) + Na(+)(in). It catalyses the reaction glycine betaine(out) + (R)-carnitine(in) = glycine betaine(in) + (R)-carnitine(out). It carries out the reaction O-butanoyl-(R)-carnitine(out) + Na(+)(out) = O-butanoyl-(R)-carnitine(in) + Na(+)(in). The catalysed reaction is O-acetyl-(R)-carnitine(out) + Na(+)(out) = O-acetyl-(R)-carnitine(in) + Na(+)(in). The enzyme catalyses O-propanoyl-(R)-carnitine(out) + Na(+)(out) = O-propanoyl-(R)-carnitine(in) + Na(+)(in). It catalyses the reaction (S)-carnitine(out) + Na(+)(out) = (S)-carnitine(in) + Na(+)(in). It carries out the reaction an O-acyl-(R)-carnitine(out) + Na(+)(out) = an O-acyl-(R)-carnitine(in) + Na(+)(in). The catalysed reaction is L-glutamyl-L-arginyl-glycyl-L-methionyl-L-threonine(out) + Na(+)(out) = L-glutamyl-L-arginyl-glycyl-L-methionyl-L-threonine(in) + Na(+)(in). The enzyme catalyses N,N-dimethylglycine(out) + Na(+)(out) = N,N-dimethylglycine(in) + Na(+)(in). Its activity is regulated as follows. Inhibited by emetine, quinidine and verapamil. The IC(50) of emetine is 4.2 uM. Not inhibited by valproic acid. Transport of (R)-carnitine is stimulated by cholesterol in the plasma membrane. Its function is as follows. Sodium-ion dependent, high affinity carnitine transporter. Involved in the active cellular uptake of carnitine. Transports one sodium ion with one molecule of carnitine. Also transports organic cations such as tetraethylammonium (TEA) without the involvement of sodium. Also relative uptake activity ratio of carnitine to TEA is 11.3. May also contribute to regulate the transport of organic compounds in testis across the blood-testis-barrier. This is Organic cation/carnitine transporter 2 from Mus musculus (Mouse).